A 209-amino-acid chain; its full sequence is Uracil phosphoribosyltransferase (209 aa).

Residues Arg-79, Arg-104, and 131 to 139 (DPMLATGGS) each bind 5-phospho-alpha-D-ribose 1-diphosphate. Uracil-binding positions include Ile-194 and 199–201 (GDA). Asp-200 is a binding site for 5-phospho-alpha-D-ribose 1-diphosphate.

This sequence belongs to the UPRTase family. Mg(2+) is required as a cofactor.

The catalysed reaction is UMP + diphosphate = 5-phospho-alpha-D-ribose 1-diphosphate + uracil. It participates in pyrimidine metabolism; UMP biosynthesis via salvage pathway; UMP from uracil: step 1/1. Allosterically activated by GTP. Functionally, catalyzes the conversion of uracil and 5-phospho-alpha-D-ribose 1-diphosphate (PRPP) to UMP and diphosphate. The protein is Uracil phosphoribosyltransferase of Clostridium tetani (strain Massachusetts / E88).